Here is a 188-residue protein sequence, read N- to C-terminus: Elongation factor P (188 aa).

The protein belongs to the elongation factor P family.

The protein localises to the cytoplasm. Its pathway is protein biosynthesis; polypeptide chain elongation. Involved in peptide bond synthesis. Stimulates efficient translation and peptide-bond synthesis on native or reconstituted 70S ribosomes in vitro. Probably functions indirectly by altering the affinity of the ribosome for aminoacyl-tRNA, thus increasing their reactivity as acceptors for peptidyl transferase. This chain is Elongation factor P, found in Methylobacterium sp. (strain 4-46).